The sequence spans 180 residues: Cuticle protein 3 (180 aa).

The N-terminal stretch at 1-16 (MMKLIVLAAFIGVCAG) is a signal peptide. A Chitin-binding type R&amp;R domain is found at 58-121 (EQGFRYAYET…PQGAHFPTPP (64 aa)).

The protein is Cuticle protein 3 of Lonomia obliqua (Moth).